The sequence spans 351 residues: Uroporphyrinogen decarboxylase (351 aa).

Substrate contacts are provided by residues 26–30, Asp-76, Tyr-153, Ser-208, and His-323; that span reads RQAGR.

The protein belongs to the uroporphyrinogen decarboxylase family. As to quaternary structure, homodimer.

It is found in the cytoplasm. The catalysed reaction is uroporphyrinogen III + 4 H(+) = coproporphyrinogen III + 4 CO2. It participates in porphyrin-containing compound metabolism; protoporphyrin-IX biosynthesis; coproporphyrinogen-III from 5-aminolevulinate: step 4/4. Functionally, catalyzes the decarboxylation of four acetate groups of uroporphyrinogen-III to yield coproporphyrinogen-III. In Prochlorococcus marinus (strain MIT 9211), this protein is Uroporphyrinogen decarboxylase.